The following is a 226-amino-acid chain: Thymidylate kinase (226 aa).

9-16 lines the ATP pocket; that stretch reads GPEGSGKS.

This sequence belongs to the thymidylate kinase family.

The catalysed reaction is dTMP + ATP = dTDP + ADP. Phosphorylation of dTMP to form dTDP in both de novo and salvage pathways of dTTP synthesis. The sequence is that of Thymidylate kinase from Roseiflexus sp. (strain RS-1).